Reading from the N-terminus, the 149-residue chain is Large ribosomal subunit protein bL9 (149 aa).

It belongs to the bacterial ribosomal protein bL9 family.

In terms of biological role, binds to the 23S rRNA. This Actinobacillus succinogenes (strain ATCC 55618 / DSM 22257 / CCUG 43843 / 130Z) protein is Large ribosomal subunit protein bL9.